The chain runs to 419 residues: Tol-Pal system protein TolB (419 aa).

The signal sequence occupies residues 1–17 (MRFIGLVLLLLSVKLFG).

This sequence belongs to the TolB family. In terms of assembly, the Tol-Pal system is composed of five core proteins: the inner membrane proteins TolA, TolQ and TolR, the periplasmic protein TolB and the outer membrane protein Pal. They form a network linking the inner and outer membranes and the peptidoglycan layer.

It localises to the periplasm. Functionally, part of the Tol-Pal system, which plays a role in outer membrane invagination during cell division and is important for maintaining outer membrane integrity. In Helicobacter hepaticus (strain ATCC 51449 / 3B1), this protein is Tol-Pal system protein TolB.